Reading from the N-terminus, the 333-residue chain is DNA-directed RNA polymerase subunit alpha (333 aa).

An alpha N-terminal domain (alpha-NTD) region spans residues Met-1–Lys-234. The tract at residues Ile-248 to Ala-333 is alpha C-terminal domain (alpha-CTD).

This sequence belongs to the RNA polymerase alpha chain family. In terms of assembly, homodimer. The RNAP catalytic core consists of 2 alpha, 1 beta, 1 beta' and 1 omega subunit. When a sigma factor is associated with the core the holoenzyme is formed, which can initiate transcription.

It catalyses the reaction RNA(n) + a ribonucleoside 5'-triphosphate = RNA(n+1) + diphosphate. DNA-dependent RNA polymerase catalyzes the transcription of DNA into RNA using the four ribonucleoside triphosphates as substrates. This Pseudomonas syringae pv. tomato (strain ATCC BAA-871 / DC3000) protein is DNA-directed RNA polymerase subunit alpha.